Here is a 567-residue protein sequence, read N- to C-terminus: Phosphoglucomutase-like protein 5 (567 aa).

The interval 1–26 (MEGSPIPVLTVPTAPYEDQRPAGGGG) is disordered. Thr-120 is modified (phosphothreonine). Residue Ser-122 is modified to Phosphoserine.

It belongs to the phosphohexose mutase family. Interacts with DMD/dystrophin; the interaction is direct. Interacts with UTRN/utrophin. As to expression, detected in smooth and cardiac muscle at high levels and in skeletal muscle at low level. Present in other tissues due to vascular or other smooth muscle component. Low levels are present in liver, kidney, skin and brain (at protein level).

It is found in the cell junction. Its subcellular location is the adherens junction. The protein resides in the cytoplasm. The protein localises to the cytoskeleton. It localises to the cell membrane. It is found in the sarcolemma. Component of adherens-type cell-cell and cell-matrix junctions. Has no phosphoglucomutase activity in vitro. This chain is Phosphoglucomutase-like protein 5, found in Homo sapiens (Human).